Here is a 497-residue protein sequence, read N- to C-terminus: Cytochrome P450 71A14 (497 aa).

A helical membrane pass occupies residues 3–23 (MIIISLCLATILALLLLKQFL). Cys-440 lines the heme pocket.

Belongs to the cytochrome P450 family. Requires heme as cofactor.

It is found in the membrane. The chain is Cytochrome P450 71A14 (CYP71A14) from Arabidopsis thaliana (Mouse-ear cress).